Consider the following 520-residue polypeptide: Hydroxymethylglutaryl-CoA synthase, cytoplasmic (520 aa).

Serine 4 is modified (phosphoserine). The (3S)-3-hydroxy-3-methylglutaryl-CoA site is built by aspartate 43 and alanine 44. 44–46 (AGK) contacts CoA. Lysine 46 is modified (N6-acetyllysine). Glutamate 95 functions as the Proton donor/acceptor in the catalytic mechanism. 5 residues coordinate (3S)-3-hydroxy-3-methylglutaryl-CoA: cysteine 129, asparagine 167, threonine 171, serine 221, and histidine 264. Cysteine 129 acts as the Acyl-thioester intermediate in catalysis. A CoA-binding site is contributed by asparagine 167. A CoA-binding site is contributed by serine 221. Histidine 264 serves as the catalytic Proton donor/acceptor. CoA is bound by residues lysine 269 and lysine 273. 3 residues coordinate (3S)-3-hydroxy-3-methylglutaryl-CoA: lysine 273, asparagine 343, and serine 377. The residue at position 273 (lysine 273) is an N6-acetyllysine. Threonine 476 carries the post-translational modification Phosphothreonine. A disordered region spans residues 492-520 (HIPSPAKKVPRLPATAAEPEAAVISNGEH). Phosphoserine is present on residues serine 495 and serine 516.

The protein belongs to the thiolase-like superfamily. HMG-CoA synthase family. In terms of assembly, homodimer.

It is found in the cytoplasm. The enzyme catalyses acetoacetyl-CoA + acetyl-CoA + H2O = (3S)-3-hydroxy-3-methylglutaryl-CoA + CoA + H(+). It functions in the pathway metabolic intermediate biosynthesis; (R)-mevalonate biosynthesis; (R)-mevalonate from acetyl-CoA: step 2/3. Catalyzes the condensation of acetyl-CoA with acetoacetyl-CoA to form HMG-CoA, which is converted by HMG-CoA reductase (HMGCR) into mevalonate, a precursor for cholesterol synthesis. In Homo sapiens (Human), this protein is Hydroxymethylglutaryl-CoA synthase, cytoplasmic.